Consider the following 324-residue polypeptide: Acetyl-coenzyme A carboxylase carboxyl transferase subunit alpha (324 aa).

Residues 37-291 form the CoA carboxyltransferase C-terminal domain; that stretch reads KLDKRLDRLK…QEYVLQEWVK (255 aa).

The protein belongs to the AccA family. Acetyl-CoA carboxylase is a heterohexamer composed of biotin carboxyl carrier protein (AccB), biotin carboxylase (AccC) and two subunits each of ACCase subunit alpha (AccA) and ACCase subunit beta (AccD).

The protein localises to the cytoplasm. The catalysed reaction is N(6)-carboxybiotinyl-L-lysyl-[protein] + acetyl-CoA = N(6)-biotinyl-L-lysyl-[protein] + malonyl-CoA. Its pathway is lipid metabolism; malonyl-CoA biosynthesis; malonyl-CoA from acetyl-CoA: step 1/1. Its function is as follows. Component of the acetyl coenzyme A carboxylase (ACC) complex. First, biotin carboxylase catalyzes the carboxylation of biotin on its carrier protein (BCCP) and then the CO(2) group is transferred by the carboxyltransferase to acetyl-CoA to form malonyl-CoA. The protein is Acetyl-coenzyme A carboxylase carboxyl transferase subunit alpha of Chlamydia trachomatis serovar L2 (strain ATCC VR-902B / DSM 19102 / 434/Bu).